We begin with the raw amino-acid sequence, 890 residues long: Agglutinin-like protein ARB_02240 (890 aa).

A signal peptide spans 1 to 20; it reads MRLTTSVLLWAATSVLQADA. Asparagine 106, asparagine 217, asparagine 583, and asparagine 654 each carry an N-linked (GlcNAc...) asparagine glycan. Residues 680 to 872 form a disordered region; sequence IPSGPTTRPE…GGAGSLSPST (193 aa). Composition is skewed to low complexity over residues 693–753 and 760–790; these read TSST…TDSS and TTST…HSST. Residues 791–802 are compositionally biased toward polar residues; sequence GSDPESTNTRHP. Low complexity-rich tracts occupy residues 803 to 812 and 821 to 837; these read SSTASGSTTT and SSSS…TATT. Residues 838-848 are compositionally biased toward gly residues; sequence TGGGSIPGSGT. A lipid anchor (GPI-anchor amidated glycine) is attached at glycine 864. Positions 865 to 890 are cleaved as a propeptide — removed in mature form; sequence AGSLSPSTWGKVVTCISSMALLVAFI.

It belongs to the ALS family. The GPI-anchor is attached to the protein in the endoplasmic reticulum and serves to target the protein to the cell surface. There, the glucosamine-inositol phospholipid moiety is cleaved off and the GPI-modified mannoprotein is covalently attached via its lipidless GPI glycan remnant to the 1,6-beta-glucan of the outer cell wall layer.

The protein resides in the secreted. The protein localises to the cell membrane. Its subcellular location is the cell wall. Its function is as follows. Cell surface adhesion protein which mediates cell agglutination and host tissue adherence. The polypeptide is Agglutinin-like protein ARB_02240 (Arthroderma benhamiae (strain ATCC MYA-4681 / CBS 112371) (Trichophyton mentagrophytes)).